A 286-amino-acid chain; its full sequence is Probable 4-deoxy-4-formamido-L-arabinose-phosphoundecaprenol deformylase ArnD (286 aa).

The 248-residue stretch at 1 to 248 folds into the NodB homology domain; that stretch reads MGTKLGVPNL…IAINEGINFC (248 aa).

It belongs to the polysaccharide deacetylase family. ArnD deformylase subfamily.

The catalysed reaction is 4-deoxy-4-formamido-alpha-L-arabinopyranosyl di-trans,octa-cis-undecaprenyl phosphate + H2O = 4-amino-4-deoxy-alpha-L-arabinopyranosyl di-trans,octa-cis-undecaprenyl phosphate + formate. It functions in the pathway glycolipid biosynthesis; 4-amino-4-deoxy-alpha-L-arabinose undecaprenyl phosphate biosynthesis; 4-amino-4-deoxy-alpha-L-arabinose undecaprenyl phosphate from UDP-4-deoxy-4-formamido-beta-L-arabinose and undecaprenyl phosphate: step 2/2. The protein operates within bacterial outer membrane biogenesis; lipopolysaccharide biosynthesis. In terms of biological role, catalyzes the deformylation of 4-deoxy-4-formamido-L-arabinose-phosphoundecaprenol to 4-amino-4-deoxy-L-arabinose-phosphoundecaprenol. The modified arabinose is attached to lipid A and is required for resistance to polymyxin and cationic antimicrobial peptides. The sequence is that of Probable 4-deoxy-4-formamido-L-arabinose-phosphoundecaprenol deformylase ArnD from Wigglesworthia glossinidia brevipalpis.